Reading from the N-terminus, the 261-residue chain is Putative carbamate hydrolase RutD (261 aa).

Residues 14–119 form the AB hydrolase-1 domain; the sequence is PTILLSSGLG…LINAWSKADP (106 aa).

Belongs to the AB hydrolase superfamily. Hydrolase RutD family.

It carries out the reaction carbamate + 2 H(+) = NH4(+) + CO2. Involved in pyrimidine catabolism. May facilitate the hydrolysis of carbamate, a reaction that can also occur spontaneously. This chain is Putative carbamate hydrolase RutD, found in Agrobacterium fabrum (strain C58 / ATCC 33970) (Agrobacterium tumefaciens (strain C58)).